Reading from the N-terminus, the 217-residue chain is 3,4-dihydroxy-2-butanone 4-phosphate synthase (217 aa).

D-ribulose 5-phosphate contacts are provided by residues 37–38 (RE), Asp-42, 150–154 (RGGHT), and Glu-174. Residue Glu-38 coordinates Mg(2+). His-153 serves as a coordination point for Mg(2+).

It belongs to the DHBP synthase family. Homodimer. It depends on Mg(2+) as a cofactor. Mn(2+) serves as cofactor.

It catalyses the reaction D-ribulose 5-phosphate = (2S)-2-hydroxy-3-oxobutyl phosphate + formate + H(+). Its pathway is cofactor biosynthesis; riboflavin biosynthesis; 2-hydroxy-3-oxobutyl phosphate from D-ribulose 5-phosphate: step 1/1. Functionally, catalyzes the conversion of D-ribulose 5-phosphate to formate and 3,4-dihydroxy-2-butanone 4-phosphate. In Pectobacterium carotovorum subsp. carotovorum (strain PC1), this protein is 3,4-dihydroxy-2-butanone 4-phosphate synthase.